A 452-amino-acid chain; its full sequence is uncharacterized protein (452 aa).

14 consecutive transmembrane segments (helical) span residues Ala-8–Ile-28, Phe-39–Val-59, Phe-77–Phe-97, Leu-100–Ile-122, Leu-134–Ile-156, Trp-161–Phe-183, Leu-203–Phe-222, Pro-226–Trp-243, Ala-266–Pro-286, Leu-302–Ile-322, Pro-330–Ile-350, Leu-359–Met-379, Gly-393–Gly-415, and Met-425–Leu-447.

It belongs to the major facilitator superfamily.

The protein localises to the cell membrane. This is an uncharacterized protein from Bacillus subtilis (strain 168).